Reading from the N-terminus, the 1099-residue chain is Transmembrane protein 132C (1099 aa).

The signal sequence occupies residues 1 to 31 (MRSEGAAPRRAARYGALSLVLATLLGQVTES). Topologically, residues 32–915 (RGVMDNIQRF…LMQTAHGLSD (884 aa)) are extracellular. Residue Asn95 is glycosylated (N-linked (GlcNAc...) asparagine). The disordered stretch occupies residues 237–260 (GDCTGGDTRKDNAIRPGKDGQEGR). N-linked (GlcNAc...) asparagine glycans are attached at residues Asn314 and Asn371. The disordered stretch occupies residues 801–872 (DADSSQTGEK…NNVGKSGRRD (72 aa)). Residues 813–849 (EEIKNHASDRRQKIQDLERPGQDELYHGNFPGDREEG) are compositionally biased toward basic and acidic residues. A helical membrane pass occupies residues 916 to 936 (LEIGMYALLGVFCLAILVFLI). Residues 937-1099 (NCATFAFKYR…TYLEKFQDSV (163 aa)) are Cytoplasmic-facing. Residues 1002–1045 (NHLLLNGGSQKPTQSQVHRPPGSGGRQTREPRQEPANSPTSKMK) are disordered. The segment covering 1008–1018 (GGSQKPTQSQV) has biased composition (polar residues).

The protein belongs to the TMEM132 family.

Its subcellular location is the membrane. The polypeptide is Transmembrane protein 132C (Tmem132c) (Mus musculus (Mouse)).